Consider the following 429-residue polypeptide: Glucose-6-phosphate exchanger SLC37A4 (429 aa).

10 helical membrane passes run 84 to 104 (LLLV…PVFA), 105 to 125 (ALWF…GKVL), 139 to 159 (AILS…ATIL), 167 to 187 (STLA…LLLI), 219 to 239 (ELLL…VFGV), 260 to 280 (LVGS…SIAA), 302 to 322 (GLLL…RVTV), 329 to 349 (LWIL…IALF), 368 to 388 (IVGL…STIA), and 394 to 414 (STAF…FFLL).

The protein belongs to the major facilitator superfamily. Organophosphate:Pi antiporter (OPA) (TC 2.A.1.4) family. Mostly expressed in liver and kidney.

The protein localises to the endoplasmic reticulum membrane. It catalyses the reaction D-glucose 6-phosphate(in) + phosphate(out) = D-glucose 6-phosphate(out) + phosphate(in). Its activity is regulated as follows. Inhibited by vanadate and chlorogenic acid. Inorganic phosphate and glucose-6-phosphate antiporter of the endoplasmic reticulum. Transports cytoplasmic glucose-6-phosphate into the lumen of the endoplasmic reticulum and translocates inorganic phosphate into the opposite direction. Forms with glucose-6-phosphatase the complex responsible for glucose production through glycogenolysis and gluconeogenesis. Hence, it plays a central role in homeostatic regulation of blood glucose levels. The polypeptide is Glucose-6-phosphate exchanger SLC37A4 (Homo sapiens (Human)).